A 237-amino-acid polypeptide reads, in one-letter code: N-demethylindolmycin N-methyltransferase (237 aa).

Belongs to the methyltransferase superfamily.

It carries out the reaction N-demethylindolmycin + S-adenosyl-L-methionine = indolmycin + S-adenosyl-L-homocysteine + H(+). In terms of biological role, involved in the biosynthesis of the antibiotic indolmycin, an inhibitor of the bacterial tryptophan-tRNA synthetases. Catalyzes the methylation of N-demethylindolmycin to yield indolmycin, with S-adenosylmethionine (AdoMet) acting as the methyl donor. In Streptomyces griseus, this protein is N-demethylindolmycin N-methyltransferase.